We begin with the raw amino-acid sequence, 469 residues long: 3-isopropylmalate dehydratase large subunit (469 aa).

Positions 347, 407, and 410 each coordinate [4Fe-4S] cluster.

The protein belongs to the aconitase/IPM isomerase family. LeuC type 1 subfamily. In terms of assembly, heterodimer of LeuC and LeuD. It depends on [4Fe-4S] cluster as a cofactor.

The catalysed reaction is (2R,3S)-3-isopropylmalate = (2S)-2-isopropylmalate. It functions in the pathway amino-acid biosynthesis; L-leucine biosynthesis; L-leucine from 3-methyl-2-oxobutanoate: step 2/4. Its function is as follows. Catalyzes the isomerization between 2-isopropylmalate and 3-isopropylmalate, via the formation of 2-isopropylmaleate. The sequence is that of 3-isopropylmalate dehydratase large subunit from Photorhabdus laumondii subsp. laumondii (strain DSM 15139 / CIP 105565 / TT01) (Photorhabdus luminescens subsp. laumondii).